Here is a 754-residue protein sequence, read N- to C-terminus: Condensin complex subunit 2 (754 aa).

The disordered stretch occupies residues 104 to 149; that stretch reads LAQRKTNGASNGDDSNGGNGEGLGGDSDEANIEIDPLTGMPISNDP. Positions 118 to 128 are enriched in gly residues; that stretch reads SNGGNGEGLGG. Position 245 is a phosphoserine (Ser-245). The disordered stretch occupies residues 359–379; sequence CYPDENHDNTSHDEQDDDNVN. Over residues 362–371 the composition is skewed to basic and acidic residues; it reads DENHDNTSHD. Ser-548 carries the post-translational modification Phosphoserine. The segment at 665-688 is disordered; sequence HDSRKNREQSSNDSETHTEDESTK.

It belongs to the CND2 (condensin subunit 2) family. In terms of assembly, component of the condensin complex, which contains the SMC2 and SMC4 heterodimer, and three non SMC subunits that probably regulate the complex: BRN1, YCS4 and YCG1/YCS5.

The protein localises to the nucleus. It localises to the cytoplasm. The protein resides in the chromosome. In terms of biological role, regulatory subunit of the condensin complex, a complex required for conversion of interphase chromatin into mitotic-like condense chromosomes. The condensin complex probably introduces positive supercoils into relaxed DNA in the presence of type I topoisomerases and converts nicked DNA into positive knotted forms in the presence of type II topoisomerases. The condensin complex probably also plays a role during interphase. This is Condensin complex subunit 2 (BRN1) from Saccharomyces cerevisiae (strain ATCC 204508 / S288c) (Baker's yeast).